The chain runs to 132 residues: Small integral membrane protein 33 (132 aa).

Residues 1 to 28 (MHQAGHYSWPSPAVNSSSEQEPQRQLPE) are disordered. Residue Asn-15 is glycosylated (N-linked (GlcNAc...) asparagine). Residues 43–63 (PVVTVIVAVFVLLAVCIIVAV) form a helical membrane-spanning segment. The disordered stretch occupies residues 99–132 (PQDSPEEAPPGPLVPGSCPAPDGPRPSIDEVTCL).

The protein resides in the membrane. The polypeptide is Small integral membrane protein 33 (Homo sapiens (Human)).